A 280-amino-acid polypeptide reads, in one-letter code: UPF0276 protein CC_3255 (280 aa).

This sequence belongs to the UPF0276 family.

This Caulobacter vibrioides (strain ATCC 19089 / CIP 103742 / CB 15) (Caulobacter crescentus) protein is UPF0276 protein CC_3255.